A 418-amino-acid chain; its full sequence is Cyclin-A1 (418 aa).

This sequence belongs to the cyclin family. Cyclin AB subfamily. Interacts with the CDK1 and the CDK2 protein kinases to form a serine/threonine kinase holoenzyme complex. The cyclin subunit imparts substrate specificity to the complex.

It localises to the nucleus. In terms of biological role, may be involved in the control of the cell cycle at the G1/S (start) and G2/M (mitosis) transitions. The chain is Cyclin-A1 (ccna1) from Xenopus laevis (African clawed frog).